A 494-amino-acid chain; its full sequence is Alpha-amylase (494 aa).

Positions 1–26 are cleaved as a signal peptide; that stretch reads MQISKAALLASLAALVYAQPVTLFKR. A disulfide bridge connects residues C57 and C65. W110 provides a ligand contact to substrate. Ca(2+) is bound at residue N148. Residue H149 participates in substrate binding. Residues C177 and C191 are joined by a disulfide bond. Ca(2+) is bound at residue D202. N-linked (GlcNAc...) asparagine glycosylation is present at N224. Position 231 (R231) interacts with substrate. Ca(2+) contacts are provided by D233, H237, and E257. D233 acts as the Nucleophile in catalysis. A substrate-binding site is contributed by 236–237; the sequence is KH. E257 acts as the Proton donor in catalysis. G261 serves as a coordination point for substrate. A disulfide bridge connects residues C267 and C310. The substrate site is built by D324 and R371. A disulfide bridge connects residues C462 and C493.

The protein belongs to the glycosyl hydrolase 13 family. Ca(2+) serves as cofactor.

It localises to the secreted. The catalysed reaction is Endohydrolysis of (1-&gt;4)-alpha-D-glucosidic linkages in polysaccharides containing three or more (1-&gt;4)-alpha-linked D-glucose units.. This is Alpha-amylase (ALP1) from Saccharomycopsis fibuligera (Yeast).